A 329-amino-acid polypeptide reads, in one-letter code: Prostaglandin reductase 1 (329 aa).

At Thr-18 the chain carries Phosphothreonine. At Ser-20 the chain carries Phosphoserine. NADP(+) contacts are provided by residues 152–155 (GAVG), Lys-178, Tyr-193, Asn-217, 239–245 (CGAISQY), 270–272 (FIV), and Asn-321. Residue Lys-178 is modified to N6-(2-hydroxyisobutyryl)lysine; alternate. At Lys-178 the chain carries N6-acetyllysine; alternate.

Belongs to the NADP-dependent oxidoreductase L4BD family. As to quaternary structure, monomer or homodimer.

It is found in the cytoplasm. It catalyses the reaction 13,14-dihydro-15-oxo-prostaglandin E1 + NADP(+) = 15-oxoprostaglandin E1 + NADPH + H(+). The catalysed reaction is 13,14-dihydro-15-oxo-prostaglandin E2 + NADP(+) = 15-oxoprostaglandin E2 + NADPH + H(+). The enzyme catalyses 13,14-dihydro-15-oxo-prostaglandin F1alpha + NADP(+) = 15-oxoprostaglandin F1alpha + NADPH + H(+). It carries out the reaction 13,14-dihydro-15-oxo-PGF2alpha + NADP(+) = 15-oxoprostaglandin F2alpha + NADPH + H(+). It catalyses the reaction leukotriene B4 + NADP(+) = 12-oxo-leukotriene B4 + NADPH + H(+). The catalysed reaction is 20-hydroxy-leukotriene B4 + NADP(+) = 12-oxo-20-hydroxy-leukotriene B4 + NADPH + H(+). The enzyme catalyses 6-trans-leukotriene B4 + NADP(+) = 12-oxo-(5S)-hydroxy-(6E,8E,10E,14Z)-eicosatetraenoate + NADPH + H(+). It carries out the reaction (5S,12S)-dihydroxy-(6E,10E,12E,14Z)-eicosatetraenoate + NADP(+) = 12-oxo-(5S)-hydroxy-(6E,8E,10E,14Z)-eicosatetraenoate + NADPH + H(+). It catalyses the reaction an n-alkanal + NADP(+) = an alk-2-enal + NADPH + H(+). The catalysed reaction is hexanal + NADP(+) = (E)-hex-2-enal + NADPH + H(+). The enzyme catalyses octanal + NADP(+) = (2E)-octenal + NADPH + H(+). It carries out the reaction decanal + NADP(+) = (2E)-decenal + NADPH + H(+). It catalyses the reaction dodecanal + NADP(+) = (2E)-dodecenal + NADPH + H(+). The catalysed reaction is 4-hydroxynonanal + NADP(+) = (E)-4-hydroxynon-2-enal + NADPH + H(+). The enzyme catalyses pentan-2-one + NADP(+) = (E)-pent-3-en-2-one + NADPH + H(+). It carries out the reaction nonan-2-one + NADP(+) = (3E)-nonen-2-one + NADPH + H(+). Functionally, NAD(P)H-dependent oxidoreductase involved in metabolic inactivation of pro- and anti-inflammatory eicosanoids: prostaglandins (PG), leukotrienes (LT) and lipoxins (LX). Catalyzes with high efficiency the reduction of the 13,14 double bond of 15-oxoPGs, including 15-oxo-PGE1, 15-oxo-PGE2, 15-oxo-PGF1-alpha and 15-oxo-PGF2-alpha. Catalyzes with lower efficiency the oxidation of the hydroxyl group at C12 of LTB4 and its derivatives, converting them into biologically less active 12-oxo-LTB4 metabolites. Reduces 15-oxo-LXA4 to 13,14 dihydro-15-oxo-LXA4, enhancing neutrophil recruitment at the inflammatory site. Plays a role in metabolic detoxification of alkenals and ketones. Reduces alpha,beta-unsaturated alkenals and ketones, particularly those with medium-chain length, showing highest affinity toward (2E)-decenal and (3E)-3-nonen-2-one. Inactivates 4-hydroxy-2-nonenal, a cytotoxic lipid constituent of oxidized low-density lipoprotein particles. The polypeptide is Prostaglandin reductase 1 (Ptgr1) (Rattus norvegicus (Rat)).